Consider the following 567-residue polypeptide: Proline--tRNA ligase (567 aa).

It belongs to the class-II aminoacyl-tRNA synthetase family. ProS type 1 subfamily. Homodimer.

The protein resides in the cytoplasm. It catalyses the reaction tRNA(Pro) + L-proline + ATP = L-prolyl-tRNA(Pro) + AMP + diphosphate. Functionally, catalyzes the attachment of proline to tRNA(Pro) in a two-step reaction: proline is first activated by ATP to form Pro-AMP and then transferred to the acceptor end of tRNA(Pro). As ProRS can inadvertently accommodate and process non-cognate amino acids such as alanine and cysteine, to avoid such errors it has two additional distinct editing activities against alanine. One activity is designated as 'pretransfer' editing and involves the tRNA(Pro)-independent hydrolysis of activated Ala-AMP. The other activity is designated 'posttransfer' editing and involves deacylation of mischarged Ala-tRNA(Pro). The misacylated Cys-tRNA(Pro) is not edited by ProRS. The protein is Proline--tRNA ligase of Idiomarina loihiensis (strain ATCC BAA-735 / DSM 15497 / L2-TR).